The sequence spans 154 residues: MGSVLVDLQIATENIEGLPTEEQIVQWATAAIQPEGNEVEMTVRIVDEAESHELNLTYRGKDRPTNVLSFPFECPDEVELPLLGDLVICRQVVEREAAEQEKPLMAHWAHMVVHGGLHLLGYDHIEDDEAEEMESLETQIMQGLGFDDPYLAEK.

Zn(2+)-binding residues include histidine 114, histidine 118, and histidine 124.

This sequence belongs to the endoribonuclease YbeY family. The cofactor is Zn(2+).

It localises to the cytoplasm. Single strand-specific metallo-endoribonuclease involved in late-stage 70S ribosome quality control and in maturation of the 3' terminus of the 16S rRNA. This chain is Endoribonuclease YbeY, found in Haemophilus influenzae (strain PittEE).